The following is a 357-amino-acid chain: Major outer membrane protein P.IB (357 aa).

Positions methionine 1–alanine 19 are cleaved as a signal peptide.

It belongs to the Gram-negative porin family. Homotrimer.

The protein localises to the cell outer membrane. Functionally, serves as a slightly cation selective porin. This Neisseria sicca protein is Major outer membrane protein P.IB (por).